We begin with the raw amino-acid sequence, 511 residues long: BAR/IMD domain-containing adapter protein 2-like 1 (511 aa).

One can recognise an IMD domain in the interval 1 to 249 (MSRGPEEVNR…MNMIEEIKTP (249 aa)). The stretch at 115–154 (MNATLKRYQTEHKNKLESLEKSQAELKKIRRKSQGSRNAL) forms a coiled coil. Phosphothreonine is present on residues T248 and T257. Phosphoserine is present on residues S261 and S281. The tract at residues 302-328 (NNPATAAPNSQRVNNSTGTSEDPSLQR) is disordered. Residues 303 to 328 (NPATAAPNSQRVNNSTGTSEDPSLQR) are compositionally biased toward polar residues. Residues S331 and S354 each carry the phosphoserine modification. Residues 339–402 (MKKQKVKTIF…PSSYTKLLEE (64 aa)) enclose the SH3 domain. T412 carries the post-translational modification Phosphothreonine. Phosphoserine is present on residues S414, S420, and S422. The disordered stretch occupies residues 451–511 (RRADSARTTS…TNDRSAPIIR (61 aa)). The interval 483–511 (PPFLSGENPFATVKLRPTVTNDRSAPIIR) is binds F-actin.

As to quaternary structure, interacts with RAC1. Binds to F-actin. Interacts with FASLG. Interacts (via SH3 domain) with E.coli effector protein EspF(U) (via PXXP motifs). Identified in a complex containing at least WASL, BAIAP2L1 and E.coli EspF(U). Interacts with E.coli intimin receptor Tir. Post-translationally, phosphorylated on tyrosine in response to insulin.

The protein resides in the cytoplasm. The protein localises to the cytoskeleton. In terms of biological role, may function as adapter protein. Involved in the formation of clusters of actin bundles. Plays a role in the reorganization of the actin cytoskeleton in response to bacterial infection. The polypeptide is BAR/IMD domain-containing adapter protein 2-like 1 (BAIAP2L1) (Homo sapiens (Human)).